We begin with the raw amino-acid sequence, 906 residues long: Probable RNA-directed DNA polymerase from transposon BS (906 aa).

In terms of domain architecture, Reverse transcriptase spans 482–758; that stretch reads AILRVQFFPK…SQAKYLGITL (277 aa).

Mg(2+) serves as cofactor. It depends on Mn(2+) as a cofactor.

The catalysed reaction is DNA(n) + a 2'-deoxyribonucleoside 5'-triphosphate = DNA(n+1) + diphosphate. The polypeptide is Probable RNA-directed DNA polymerase from transposon BS (Drosophila melanogaster (Fruit fly)).